Consider the following 450-residue polypeptide: Glutathione reductase (450 aa).

Residues Ser-14, Gly-15, Glu-34, Thr-41, Cys-42, Lys-50, and Ala-115 each contribute to the FAD site. Residue Ser-14 coordinates glutathione. Cys-42 and Cys-47 are disulfide-bonded. NADP(+) is bound by residues Ala-175, Ile-178, Glu-181, Arg-198, Arg-204, and Gly-262. FAD is bound at residue Asp-303. Residue Asp-309 participates in NADP(+) binding. Thr-311 serves as a coordination point for FAD. Position 319 (Arg-319) interacts with glutathione. Residue Val-342 coordinates NADP(+). His-439 is an FAD binding site. The active-site Proton acceptor is His-439.

The protein belongs to the class-I pyridine nucleotide-disulfide oxidoreductase family. Homodimer. FAD serves as cofactor.

The protein localises to the cytoplasm. The enzyme catalyses 2 glutathione + NADP(+) = glutathione disulfide + NADPH + H(+). Its function is as follows. Catalyzes the reduction of glutathione disulfide (GSSG) to reduced glutathione (GSH). Constitutes the major mechanism to maintain a high GSH:GSSG ratio in the cytosol. This chain is Glutathione reductase (gor), found in Streptococcus thermophilus.